The sequence spans 220 residues: Guanylate kinase (220 aa).

Residues glycine 16–arginine 195 form the Guanylate kinase-like domain. Serine 23–threonine 30 is an ATP binding site.

The protein belongs to the guanylate kinase family.

Its subcellular location is the cytoplasm. The enzyme catalyses GMP + ATP = GDP + ADP. Its function is as follows. Essential for recycling GMP and indirectly, cGMP. In Rhodopseudomonas palustris (strain ATCC BAA-98 / CGA009), this protein is Guanylate kinase.